Here is a 537-residue protein sequence, read N- to C-terminus: Chaperonin GroEL 1 (537 aa).

ATP contacts are provided by residues 29–32 (TLGP), 86–90 (DGTTT), G413, and D494.

Belongs to the chaperonin (HSP60) family. Forms a cylinder of 14 subunits composed of two heptameric rings stacked back-to-back. Interacts with the co-chaperonin GroES.

It is found in the cytoplasm. It carries out the reaction ATP + H2O + a folded polypeptide = ADP + phosphate + an unfolded polypeptide.. Functionally, together with its co-chaperonin GroES, plays an essential role in assisting protein folding. The GroEL-GroES system forms a nano-cage that allows encapsulation of the non-native substrate proteins and provides a physical environment optimized to promote and accelerate protein folding. The polypeptide is Chaperonin GroEL 1 (Mycobacterium leprae (strain TN)).